The primary structure comprises 207 residues: MKKYRDHYFLKAKRENYPARSVYKLKEIDKRFGILKQGMRVLDLGAAPGSWSLGAAEKIGPSGRVLAADIQTTETVFPPNVTFMQEDVFERSAEFEQALSETGPFDVVISDMAPKTTGHKFTDQARSSNLCFEALAVASLHLVEGGSFVVKIFMGPDVEAYVKQMRTLFTAVKSFKPKSSRSESKETFYIGLGFKGLPEFSEQEGED.

Positions 49, 51, 69, 87, and 111 each coordinate S-adenosyl-L-methionine. The active-site Proton acceptor is the lysine 151.

This sequence belongs to the class I-like SAM-binding methyltransferase superfamily. RNA methyltransferase RlmE family.

Its subcellular location is the cytoplasm. It carries out the reaction uridine(2552) in 23S rRNA + S-adenosyl-L-methionine = 2'-O-methyluridine(2552) in 23S rRNA + S-adenosyl-L-homocysteine + H(+). Its function is as follows. Specifically methylates the uridine in position 2552 of 23S rRNA at the 2'-O position of the ribose in the fully assembled 50S ribosomal subunit. The sequence is that of Ribosomal RNA large subunit methyltransferase E from Oleidesulfovibrio alaskensis (strain ATCC BAA-1058 / DSM 17464 / G20) (Desulfovibrio alaskensis).